The primary structure comprises 411 residues: Arginine deiminase (411 aa).

C401 serves as the catalytic Amidino-cysteine intermediate.

This sequence belongs to the arginine deiminase family.

It is found in the cytoplasm. It catalyses the reaction L-arginine + H2O = L-citrulline + NH4(+). It participates in amino-acid degradation; L-arginine degradation via ADI pathway; carbamoyl phosphate from L-arginine: step 1/2. This is Arginine deiminase from Streptococcus pyogenes serotype M49 (strain NZ131).